Consider the following 173-residue polypeptide: Myeloid-derived growth factor (173 aa).

Residues 1 to 31 form the signal peptide; sequence MAAPSGGWNGVGASLWAALLLGAVALRPAEA.

This sequence belongs to the MYDGF family. In terms of tissue distribution, expressed in eosinophils (at protein level). Expressed in bone marrow cells. Expressed in synovial tissue. Found in synovial fluid of patients with arthropaties.

It localises to the secreted. Its subcellular location is the endoplasmic reticulum-Golgi intermediate compartment. The protein localises to the endoplasmic reticulum. The protein resides in the golgi apparatus. In terms of biological role, bone marrow-derived monocyte and paracrine-acting protein that promotes cardiac myocyte survival and adaptive angiogenesis for cardiac protection and/or repair after myocardial infarction (MI). Stimulates endothelial cell proliferation through a MAPK1/3-, STAT3- and CCND1-mediated signaling pathway. Inhibits cardiac myocyte apoptosis in a PI3K/AKT-dependent signaling pathway. Involved in endothelial cell proliferation and angiogenesis. In Homo sapiens (Human), this protein is Myeloid-derived growth factor.